We begin with the raw amino-acid sequence, 361 residues long: Phosphoserine aminotransferase (361 aa).

R43 provides a ligand contact to L-glutamate. Pyridoxal 5'-phosphate is bound by residues 77-78 (AS), W103, T153, D173, and Q196. K197 is subject to N6-(pyridoxal phosphate)lysine. 238-239 (NT) serves as a coordination point for pyridoxal 5'-phosphate.

This sequence belongs to the class-V pyridoxal-phosphate-dependent aminotransferase family. SerC subfamily. Homodimer. Requires pyridoxal 5'-phosphate as cofactor.

It localises to the cytoplasm. It catalyses the reaction O-phospho-L-serine + 2-oxoglutarate = 3-phosphooxypyruvate + L-glutamate. The enzyme catalyses 4-(phosphooxy)-L-threonine + 2-oxoglutarate = (R)-3-hydroxy-2-oxo-4-phosphooxybutanoate + L-glutamate. The protein operates within amino-acid biosynthesis; L-serine biosynthesis; L-serine from 3-phospho-D-glycerate: step 2/3. Its pathway is cofactor biosynthesis; pyridoxine 5'-phosphate biosynthesis; pyridoxine 5'-phosphate from D-erythrose 4-phosphate: step 3/5. Functionally, catalyzes the reversible conversion of 3-phosphohydroxypyruvate to phosphoserine and of 3-hydroxy-2-oxo-4-phosphonooxybutanoate to phosphohydroxythreonine. In Ectopseudomonas mendocina (strain ymp) (Pseudomonas mendocina), this protein is Phosphoserine aminotransferase.